A 191-amino-acid polypeptide reads, in one-letter code: Cell division protein SepF (191 aa).

Over residues S151–T164 the composition is skewed to low complexity. The disordered stretch occupies residues S151 to S191. Residues E165–P178 are compositionally biased toward polar residues.

The protein belongs to the SepF family. In terms of assembly, homodimer. Interacts with FtsZ.

The protein localises to the cytoplasm. In terms of biological role, cell division protein that is part of the divisome complex and is recruited early to the Z-ring. Probably stimulates Z-ring formation, perhaps through the cross-linking of FtsZ protofilaments. Its function overlaps with FtsA. This Prochlorococcus marinus (strain MIT 9301) protein is Cell division protein SepF.